The following is a 153-amino-acid chain: ORM1-like protein 1 (153 aa).

The Cytoplasmic segment spans residues 1 to 26 (MNVGVAHSEVNPNTRVMNSRGMWLTY). A run of 2 helical transmembrane segments spans residues 27–46 (ALGV…FSVP) and 47–64 (VAWT…YVFL). At 65–100 (HAVKGTPFETPDQGKARLLTHWEQLDYGVQFTSSRK) the chain is on the cytoplasmic side. A helical transmembrane segment spans residues 101 to 121 (FFTISPIILYFLASFYTKYDP). The Extracellular segment spans residues 122 to 123 (TH). Residues 124–140 (FILNTASLLSVLIPKMP) form a helical membrane-spanning segment. Residues 141–153 (QLHGVRIFGINKY) lie on the Cytoplasmic side of the membrane.

Belongs to the ORM family. As to quaternary structure, ceramide-sensitive subunit of the serine palmitoyltransferase (SPT) complex, which is also composed of SPTLC1, SPTLC2/3 and SPTSSA/B. As to expression, widely expressed. Expressed in adult and fetal heart, brain, lung, liver, skeletal muscle and kidney. Expressed in adult pancreas and placenta and in fetal spleen abd thymus. Expressed at intermediate level in pancreas, placenta and brain but low in skeletal muscle and lung.

The protein localises to the endoplasmic reticulum membrane. Its function is as follows. Plays an essential role in the homeostatic regulation of sphingolipid de novo biosynthesis by modulating the activity of the serine palmitoyltransferase (SPT) in response to ceramide levels. When complexed to SPT, the binding of ceramides to its N-terminus stabilizes a conformation that block SPT substrate entry, hence preventing SPT catalytic activity. Through this mechanism, maintains ceramide levels at sufficient concentrations for the production of complex sphingolipids, but which prevents the accumulation of ceramides to levels that trigger apoptosis. The chain is ORM1-like protein 1 (ORMDL1) from Homo sapiens (Human).